The chain runs to 301 residues: Fatty acid elongase 3 (301 aa).

The next 7 membrane-spanning stretches (helical) occupy residues Val-31–Met-51, Ile-64–Tyr-84, Ala-122–Leu-142, Val-161–Val-181, Gly-187–Val-207, Phe-219–Cys-239, and Phe-257–Phe-277. The HxxHH motif signature appears at His-165 to His-169. The Nucleophile role is filled by His-168.

The protein belongs to the ELO family.

The protein localises to the endoplasmic reticulum membrane. It carries out the reaction an acyl-CoA + malonyl-CoA + H(+) = a 3-oxoacyl-CoA + CO2 + CoA. It functions in the pathway lipid metabolism; fatty acid biosynthesis. Its function is as follows. Involved in the synthesis of fatty acids. Elongates C14 fatty acids to C18. The protein is Fatty acid elongase 3 of Trypanosoma brucei brucei (strain 927/4 GUTat10.1).